Consider the following 128-residue polypeptide: Hemoglobin subunit beta-1 (128 aa).

The region spanning 2–128 is the Globin domain; sequence HWTAEEKALV…VVDALSKGYH (127 aa). His-51 and His-74 together coordinate heme b.

This sequence belongs to the globin family. In terms of assembly, hb 1 is a heterotetramer of two alpha and two beta-1 chains. In terms of tissue distribution, red blood cells (at protein level).

In terms of biological role, involved in oxygen transport from gills to the various peripheral tissues. This is Hemoglobin subunit beta-1 from Somniosus microcephalus (Greenland sleeper shark).